A 53-amino-acid chain; its full sequence is Ovomucoid (53 aa).

Residues 3–53 enclose the Kazal-like domain; it reads VDCSEYPQPTCTTEHRPVCGSNNETYGNKCNFCNAVVKSNGTLTVSHFGKC. Intrachain disulfides connect Cys-5-Cys-35, Cys-13-Cys-32, and Cys-21-Cys-53. A glycan (N-linked (GlcNAc...) asparagine) is linked at Asn-42.

The protein resides in the secreted. This chain is Ovomucoid, found in Polyplectron bicalcaratum (Grey peacock-pheasant).